Consider the following 66-residue polypeptide: Toxin Cll1 (66 aa).

One can recognise an LCN-type CS-alpha/beta domain in the interval 1–66 (KEGYLVNKST…TYPLPNKSCS (66 aa)). Cystine bridges form between Cys12–Cys65, Cys16–Cys41, Cys25–Cys46, and Cys29–Cys48.

Belongs to the long (4 C-C) scorpion toxin superfamily. Sodium channel inhibitor family. Beta subfamily. In terms of tissue distribution, expressed by the venom gland.

The protein resides in the secreted. Beta toxin that binds site-4 of sodium channels (Nav) and reduces peak current (observed on Nav1.1/SCN1A, Nav1.2/SCN2A, Nav1.3/SCN3A, Nav1.4/SCN5A, Nav1.5/SCN4A, and Nav1.6/SCN8A (IC(50)=44.9 nM)), shifts the voltage of activation toward more negative potentials (observed on Nav1.6, Nav1.1 (weak), Nav1.2 (weak), and Nav1.7 (weak)), and induces resurgent currents at negative voltages following brief and strong depolarizations (observed on Nav1.6, Nav1.1 (weak), Nav1.2 (weak), and Nav1.4 (weak)). This toxin is only active on crustaceans. The protein is Toxin Cll1 of Centruroides limpidus (Mexican scorpion).